Here is a 301-residue protein sequence, read N- to C-terminus: Heterogeneous nuclear ribonucleoprotein D-like (301 aa).

The interval 1-29 (MEDATEMSGGAEEFAEGSKINASKNQQDD) is disordered. RRM domains follow at residues 30–112 (GKMF…KGKE) and 115–194 (KKVF…QPKE). Disordered regions lie at residues 194-230 (EVYRQQQQQQKGGKSNASGGRGGGRGRGRGQGQNWNQ) and 269-301 (GYGPGYTDYSGQQSTYGKASRGGGNHQNNYQPY). Residues 212-224 (GGRGGGRGRGRGQ) show a composition bias toward gly residues.

It is found in the nucleus. It localises to the cytoplasm. In terms of biological role, acts as a transcriptional regulator. Binds DNA and RNA. The polypeptide is Heterogeneous nuclear ribonucleoprotein D-like (HNRNPDL) (Gallus gallus (Chicken)).